The primary structure comprises 225 residues: MTPPMNKLTSKLGYTFKETELLNLALTHRSANGKHNERLEFLGDSILSFVIADELYRRFPKVNEGDMSRMRATLVRGNTLAELGREFDLGDYLKLGPGELKSGGFRRDSILADAVEAIIGAIYLDSDLETARSIVLEWYHGRLEEIKPGASQKDPKTRLQEFLQGRRKPLPVYTVTNIKGEAHNQEFTVACEVAGMDTPVIGKGTSRRKAEQAAAETALEQLTNG.

Residues 5 to 127 (MNKLTSKLGY…IIGAIYLDSD (123 aa)) enclose the RNase III domain. Position 40 (Glu-40) interacts with Mg(2+). Residue Asp-44 is part of the active site. Mg(2+) is bound by residues Asp-113 and Glu-116. Residue Glu-116 is part of the active site. The region spanning 154-224 (DPKTRLQEFL…AETALEQLTN (71 aa)) is the DRBM domain.

It belongs to the ribonuclease III family. As to quaternary structure, homodimer. The cofactor is Mg(2+).

It is found in the cytoplasm. The enzyme catalyses Endonucleolytic cleavage to 5'-phosphomonoester.. In terms of biological role, digests double-stranded RNA. Involved in the processing of primary rRNA transcript to yield the immediate precursors to the large and small rRNAs (23S and 16S). Processes some mRNAs, and tRNAs when they are encoded in the rRNA operon. Processes pre-crRNA and tracrRNA of type II CRISPR loci if present in the organism. This is Ribonuclease 3 from Vibrio cholerae serotype O1 (strain ATCC 39315 / El Tor Inaba N16961).